A 516-amino-acid chain; its full sequence is Nondiscriminating glutamyl-tRNA synthetase EARS2, mitochondrial (516 aa).

Residues 1–39 constitute a mitochondrion transit peptide; that stretch reads MRPAFIRGKWLSRTLELATGLGRRTCSSRESGREVRVRF. L-glutamate is bound at residue 38 to 40; sequence RFA. Positions 43–51 match the 'HIGH' region motif; that stretch reads PTGFLHLGG. Histidine 48 serves as a coordination point for ATP. L-glutamate-binding positions include glutamate 74, 226 to 230, and arginine 244; that span reads YHLAN. Residues glutamate 247 and 282–286 each bind ATP; that span reads KLSKR. The short motif at 282–286 is the 'KMSKS' region element; it reads KLSKR.

Belongs to the class-I aminoacyl-tRNA synthetase family. Glutamate--tRNA ligase type 1 subfamily.

It is found in the mitochondrion matrix. It carries out the reaction tRNA(Glx) + L-glutamate + ATP = L-glutamyl-tRNA(Glx) + AMP + diphosphate. It catalyses the reaction tRNA(Glu) + L-glutamate + ATP = L-glutamyl-tRNA(Glu) + AMP + diphosphate. The catalysed reaction is tRNA(Gln) + L-glutamate + ATP = L-glutamyl-tRNA(Gln) + AMP + diphosphate. Functionally, non-discriminating glutamyl-tRNA synthetase that catalyzes aminoacylation of both mitochondrial tRNA(Glu) and tRNA(Gln) and participates in RNA aminoacylation for mitochondrial protein translation. Attachs glutamate to tRNA(Glu) or tRNA(Gln) in a two-step reaction: glutamate is first activated by ATP to form Glu-AMP and then transferred to the acceptor end of tRNA(Glu) or tRNA(Gln). The protein is Nondiscriminating glutamyl-tRNA synthetase EARS2, mitochondrial of Xenopus tropicalis (Western clawed frog).